A 428-amino-acid chain; its full sequence is 2,3-bisphosphoglycerate-independent phosphoglycerate mutase 2 (428 aa).

The protein belongs to the BPG-independent phosphoglycerate mutase family. A-PGAM subfamily.

The catalysed reaction is (2R)-2-phosphoglycerate = (2R)-3-phosphoglycerate. It functions in the pathway carbohydrate degradation; glycolysis; pyruvate from D-glyceraldehyde 3-phosphate: step 3/5. In terms of biological role, catalyzes the interconversion of 2-phosphoglycerate and 3-phosphoglycerate. This is 2,3-bisphosphoglycerate-independent phosphoglycerate mutase 2 (apgM2) from Methanocaldococcus jannaschii (strain ATCC 43067 / DSM 2661 / JAL-1 / JCM 10045 / NBRC 100440) (Methanococcus jannaschii).